Reading from the N-terminus, the 313-residue chain is Proclavaminate amidinohydrolase (313 aa).

Residues H121, D144, H146, D148, D235, and D237 each coordinate Mn(2+).

This sequence belongs to the arginase family. As to quaternary structure, homohexamer. Mn(2+) is required as a cofactor.

The enzyme catalyses amidinoproclavaminate + H2O = proclavaminate + urea. It functions in the pathway antibiotic biosynthesis; clavulanate biosynthesis; clavulanate from D-glyceraldehyde 3-phosphate and L-arginine: step 4/8. The sequence is that of Proclavaminate amidinohydrolase (pah) from Streptomyces clavuligerus.